The chain runs to 537 residues: Apolipoprotein N-acyltransferase (537 aa).

A run of 6 helical transmembrane segments spans residues 10–30 (IALAIILTWGWKRALVAITAG), 37–57 (LAPFNLFPVLFITFPVLVWLI), 76–96 (YWFGLGYFVPGLYWIGYAFFV), 107–127 (FAVLGLPAYLSIFTAIGFALA), 181–201 (IGLWGMTFLTVAIFASPATLI), and 210–230 (AWRAPAAAVALLIAMSIFGAI). One can recognise a CN hydrolase domain in the interval 248-501 (MQPNLQQDAK…EGILDASLPA (254 aa)). Glu-295 (proton acceptor) is an active-site residue. Lys-360 is a catalytic residue. Cys-413 serves as the catalytic Nucleophile. The helical transmembrane segment at 507 to 527 (IYARVGDVPAAVLVALAVLLA) threads the bilayer.

The protein belongs to the CN hydrolase family. Apolipoprotein N-acyltransferase subfamily.

It localises to the cell inner membrane. The enzyme catalyses N-terminal S-1,2-diacyl-sn-glyceryl-L-cysteinyl-[lipoprotein] + a glycerophospholipid = N-acyl-S-1,2-diacyl-sn-glyceryl-L-cysteinyl-[lipoprotein] + a 2-acyl-sn-glycero-3-phospholipid + H(+). It participates in protein modification; lipoprotein biosynthesis (N-acyl transfer). Catalyzes the phospholipid dependent N-acylation of the N-terminal cysteine of apolipoprotein, the last step in lipoprotein maturation. This chain is Apolipoprotein N-acyltransferase, found in Bradyrhizobium diazoefficiens (strain JCM 10833 / BCRC 13528 / IAM 13628 / NBRC 14792 / USDA 110).